Consider the following 222-residue polypeptide: Peptide methionine sulfoxide reductase MsrA (222 aa).

Residue C60 is part of the active site.

This sequence belongs to the MsrA Met sulfoxide reductase family.

The enzyme catalyses L-methionyl-[protein] + [thioredoxin]-disulfide + H2O = L-methionyl-(S)-S-oxide-[protein] + [thioredoxin]-dithiol. It catalyses the reaction [thioredoxin]-disulfide + L-methionine + H2O = L-methionine (S)-S-oxide + [thioredoxin]-dithiol. Its function is as follows. Has an important function as a repair enzyme for proteins that have been inactivated by oxidation. Catalyzes the reversible oxidation-reduction of methionine sulfoxide in proteins to methionine. The chain is Peptide methionine sulfoxide reductase MsrA from Pseudomonas putida (strain ATCC 47054 / DSM 6125 / CFBP 8728 / NCIMB 11950 / KT2440).